Here is a 486-residue protein sequence, read N- to C-terminus: N-succinylglutamate 5-semialdehyde dehydrogenase (486 aa).

220-225 (GSSRTG) serves as a coordination point for NAD(+). Catalysis depends on residues Glu243 and Cys277.

It belongs to the aldehyde dehydrogenase family. AstD subfamily.

It carries out the reaction N-succinyl-L-glutamate 5-semialdehyde + NAD(+) + H2O = N-succinyl-L-glutamate + NADH + 2 H(+). The protein operates within amino-acid degradation; L-arginine degradation via AST pathway; L-glutamate and succinate from L-arginine: step 4/5. Functionally, catalyzes the NAD-dependent reduction of succinylglutamate semialdehyde into succinylglutamate. The sequence is that of N-succinylglutamate 5-semialdehyde dehydrogenase from Shewanella sp. (strain W3-18-1).